Reading from the N-terminus, the 312-residue chain is UPF0725 protein At3g19520 (312 aa).

It belongs to the UPF0725 (EMB2204) family.

This chain is UPF0725 protein At3g19520, found in Arabidopsis thaliana (Mouse-ear cress).